The following is a 119-amino-acid chain: Beta-2-microglobulin (119 aa).

A signal peptide spans 1 to 20; that stretch reads MARFVVVALLVLLSLSGLEA. An Ig-like C1-type domain is found at 25 to 114; the sequence is PKIQVYSRHP…VTLSTPKTVK (90 aa). An intrachain disulfide couples C45 to C100.

It belongs to the beta-2-microglobulin family. Heterodimer of an alpha chain and a beta chain. Beta-2-microglobulin is the beta-chain of major histocompatibility complex class I molecules.

The protein localises to the secreted. In terms of biological role, component of the class I major histocompatibility complex (MHC). Involved in the presentation of peptide antigens to the immune system. The sequence is that of Beta-2-microglobulin (B2M) from Aotus azarae (Azara's night monkey).